Consider the following 853-residue polypeptide: DNA mismatch repair protein MutS (853 aa).

614 to 621 (GPNMGGKS) lines the ATP pocket.

This sequence belongs to the DNA mismatch repair MutS family.

Its function is as follows. This protein is involved in the repair of mismatches in DNA. It is possible that it carries out the mismatch recognition step. This protein has a weak ATPase activity. This chain is DNA mismatch repair protein MutS, found in Escherichia coli O81 (strain ED1a).